The sequence spans 556 residues: MEKGMIKLKSTVILVLFALLYLLPLNGRWLWSPDETRYAEISREMLQRGDWIVPHLLDVRYFEKPVAGYWLNNISQWLLGHTNFSVRFASVFSTALSALLVFWLALLLWKNRRTALLAATIYLTSLLVYGIGTYSVLDPMVTLWMTAALFSHVLIQRATLTRERLMAWGLMGLACGMGFMTKGFLALALPVISVLPVALAQKRIKELLLFGPLAIVVAVLLSAPWALAVHAREADYWHYFFWIEHIQRFAEDDAQHNAPFWYYLPVLIVGTFPWLALLPGALRSGWAERKSSPERFLLLCWMVMPLLFFSIAKGKLLTYILPCFAPLALLMAAWISGLAPAVRDRLLRINSWLNLAFGSVLALAVAALGLGIIMPHLYQPGEGLTIVSGVVCFVGWVAFAAVSLKKSRSWGYLVAGCPLFLALLVGGSIPASVVDSKNPQTFIRSHQPLLEDSRYVLSDEVGLAAGLAWELKRSDITLFKARGELNYGLNYADAADRFVDEGAFPAWLAEKRRSGNVALVLKIDRDTDEEYRNLPAPDQLKKSHRYVLLFYKQIAP.

Transmembrane regions (helical) follow at residues 5-25 (MIKL…LLPL), 88-108 (FASV…ALLL), 116-136 (LLAA…TYSV), 179-199 (FMTK…PVAL), 207-227 (LLLF…PWAL), 258-278 (APFW…LALL), 296-316 (FLLL…KGKL), 319-339 (YILP…SGLA), 355-375 (LAFG…IIMP), 384-404 (LTIV…AVSL), and 410-430 (WGYL…GSIP).

This sequence belongs to the glycosyltransferase 83 family.

It localises to the cell inner membrane. The catalysed reaction is 4-amino-4-deoxy-alpha-L-arabinopyranosyl di-trans,octa-cis-undecaprenyl phosphate + lipid IVA = lipid IIA + di-trans,octa-cis-undecaprenyl phosphate.. The protein operates within lipopolysaccharide metabolism; 4-amino-4-deoxy-beta-L-arabinose-lipid A biosynthesis. Its function is as follows. Catalyzes the transfer of the L-Ara4N moiety of the glycolipid undecaprenyl phosphate-alpha-L-Ara4N to lipid A. The modified arabinose is attached to lipid A and is required for resistance to polymyxin and cationic antimicrobial peptides. This Pectobacterium carotovorum subsp. carotovorum (strain PC1) protein is Undecaprenyl phosphate-alpha-4-amino-4-deoxy-L-arabinose arabinosyl transferase.